The primary structure comprises 179 residues: MRVEVVRAPGPLNRPALAEAIDTLGKKSATVRPSSATHRATAQTLSHEITSTDLFATSTATEQQQTLLLAINDDDGAVMGFLKTGVKHLFYLNPRGEYTEIDPICVLDFYVDEVWQRRGVGLQLFQRLLQEENTTPAQLAYDRPSPKLFAFLKKHVGLTEYFPQPNRFVVFDAYFQSRE.

One can recognise an N-acetyltransferase domain in the interval 1 to 175 (MRVEVVRAPG…NRFVVFDAYF (175 aa)). Residues 109 to 122 (FYVDEVWQRRGVGL) and 145 to 154 (SPKLFAFLKK) contribute to the acetyl-CoA site.

The protein belongs to the acetyltransferase ATAT1 family.

The catalysed reaction is L-lysyl-[alpha-tubulin] + acetyl-CoA = N(6)-acetyl-L-lysyl-[alpha-tubulin] + CoA + H(+). In terms of biological role, specifically acetylates 'Lys-40' in alpha-tubulin on the lumenal side of microtubules. Promotes microtubule destabilization and accelerates microtubule dynamics; this activity may be independent of acetylation activity. Acetylates alpha-tubulin with a slow enzymatic rate, due to a catalytic site that is not optimized for acetyl transfer. Enters the microtubule through each end and diffuses quickly throughout the lumen of microtubules. Acetylates only long/old microtubules because of its slow acetylation rate since it does not have time to act on dynamically unstable microtubules before the enzyme is released. The protein is Alpha-tubulin N-acetyltransferase of Phytophthora infestans (strain T30-4) (Potato late blight agent).